The sequence spans 58 residues: MATIKVKQVKSRIKCPKDQKRTLDALGLRKMNQIVEHEANPAILGMVEKVKHLVSVEK.

It belongs to the universal ribosomal protein uL30 family. Part of the 50S ribosomal subunit.

This chain is Large ribosomal subunit protein uL30, found in Parabacteroides distasonis (strain ATCC 8503 / DSM 20701 / CIP 104284 / JCM 5825 / NCTC 11152).